The following is a 94-amino-acid chain: Small ribosomal subunit protein uS19c (94 aa).

The protein belongs to the universal ribosomal protein uS19 family.

Its subcellular location is the plastid. The protein resides in the chloroplast. Functionally, protein S19 forms a complex with S13 that binds strongly to the 16S ribosomal RNA. The polypeptide is Small ribosomal subunit protein uS19c (rps19) (Euglena gracilis).